Consider the following 350-residue polypeptide: Nicotinate-nucleotide--dimethylbenzimidazole phosphoribosyltransferase (350 aa).

Glu-317 functions as the Proton acceptor in the catalytic mechanism.

This sequence belongs to the CobT family.

The enzyme catalyses 5,6-dimethylbenzimidazole + nicotinate beta-D-ribonucleotide = alpha-ribazole 5'-phosphate + nicotinate + H(+). It participates in nucleoside biosynthesis; alpha-ribazole biosynthesis; alpha-ribazole from 5,6-dimethylbenzimidazole: step 1/2. Its function is as follows. Catalyzes the synthesis of alpha-ribazole-5'-phosphate from nicotinate mononucleotide (NAMN) and 5,6-dimethylbenzimidazole (DMB). This Shewanella sp. (strain ANA-3) protein is Nicotinate-nucleotide--dimethylbenzimidazole phosphoribosyltransferase.